The sequence spans 139 residues: D-ribose pyranase (139 aa).

The active-site Proton donor is the His20. Substrate is bound by residues Asp28, His106, and 128-130 (YAN).

The protein belongs to the RbsD / FucU family. RbsD subfamily. In terms of assembly, homodecamer.

It is found in the cytoplasm. The enzyme catalyses beta-D-ribopyranose = beta-D-ribofuranose. It participates in carbohydrate metabolism; D-ribose degradation; D-ribose 5-phosphate from beta-D-ribopyranose: step 1/2. Functionally, catalyzes the interconversion of beta-pyran and beta-furan forms of D-ribose. The protein is D-ribose pyranase of Pectobacterium carotovorum subsp. carotovorum (strain PC1).